A 302-amino-acid polypeptide reads, in one-letter code: Enoyl-CoA delta isomerase 1, mitochondrial (302 aa).

A mitochondrion-targeting transit peptide spans 1–41 (MALVASVRVPARVLLRAGARLPGAALGRTERAAGGGDGARR). K61 is modified (N6-acetyllysine; alternate). Position 61 is an N6-succinyllysine; alternate (K61). K84 carries the N6-succinyllysine modification. K89 carries the post-translational modification N6-acetyllysine. Substrate contacts are provided by residues 106–110 (AGLDL), G153, and N177. Residue K283 is modified to N6-acetyllysine; alternate. N6-succinyllysine; alternate is present on K283. K288 carries the post-translational modification N6-succinyllysine.

The protein belongs to the enoyl-CoA hydratase/isomerase family. As to quaternary structure, homotrimer. As to expression, expressed in liver (at protein level).

It is found in the mitochondrion matrix. The catalysed reaction is a (3Z)-enoyl-CoA = a 4-saturated (2E)-enoyl-CoA. It catalyses the reaction a (3E)-enoyl-CoA = a 4-saturated (2E)-enoyl-CoA. It carries out the reaction (3Z)-octenoyl-CoA = (2E)-octenoyl-CoA. The enzyme catalyses (2E)-tetradecenoyl-CoA = (3Z)-tetradecenoyl-CoA. The catalysed reaction is (3Z)-dodecenoyl-CoA = (2E)-dodecenoyl-CoA. It catalyses the reaction (3Z)-hexenoyl-CoA = (2E)-hexenoyl-CoA. It carries out the reaction (3Z)-decenoyl-CoA = (2E)-decenoyl-CoA. Its pathway is lipid metabolism; fatty acid beta-oxidation. In terms of biological role, key enzyme of fatty acid beta-oxidation. Able to isomerize both 3-cis (3Z) and 3-trans (3E) double bonds into the 2-trans (2E) form in a range of enoyl-CoA species, with a preference for (3Z)-enoyl-CoAs over (3E)-enoyl-CoAs. The catalytic efficiency of this enzyme is not affected by the fatty acyl chain length. The sequence is that of Enoyl-CoA delta isomerase 1, mitochondrial (ECI1) from Homo sapiens (Human).